A 472-amino-acid polypeptide reads, in one-letter code: Ras-GEF domain-containing family member 1B (472 aa).

Positions 34 to 164 (HDNNLLSGSL…MMQCLIRKLA (131 aa)) constitute an N-terminal Ras-GEF domain. Positions 204–452 (DPYTLAQQLT…YLASYESEGP (249 aa)) constitute a Ras-GEF domain.

In terms of assembly, interacts with CCDC124 during cytokinesis. Interacts with Ras family proteins.

The protein resides in the early endosome. It is found in the late endosome. It localises to the midbody. Functionally, guanine nucleotide exchange factor (GEF) with specificity for RAP2A, it doesn't seems to activate other Ras family proteins (in vitro). The protein is Ras-GEF domain-containing family member 1B (RASGEF1B) of Pongo abelii (Sumatran orangutan).